A 633-amino-acid chain; its full sequence is MPSIHVMSPTLASQVAAGEVVERPASVVKELVENSLDAGAKFVRVEIRRGGVGMIKVTDDGSGMSRADAELCTKRHATSKLSSLEELFEITHLGFRGEALPSIASVSRFKLCTRQQQDLEGWEIRIDGGLEHEPRSSGVSPGTAIEVADLFYNTPARRKFLKSAETEASHVEHQIRLHALAYPQVRFAYKRDDQLVFDLPATADLRVRISALTDAATAAALIPIETTIGPGISITGFLLPLSEARRTRKGQYVFMNTRPVEDQLINRAIRDGYGGFPTGLHPALFLYMEVEPALVDVNVHPAKKEVRFRRSADVVNTIVEAIANTLQKHARQEIHAAAAPEPERTLPPAHSTTAPYGEIPARSTNPGSAFPAAARPAPASSAAQPPLSSSAKQSHGAVPPPTLRAIPLKQVPATQGKLDFHRQEDEETARNAHENAALERDASAGFSYLGTLRQQFALFETPEGLVLMHPKAARERIIFERLRARREAPMPSQQLLDPVVLDLDPRDFAVIRQFAPHFDQAGMAVTPFGQNTIRIESIPALLELENARAFLLELVDRLTQSEFSRNAKRVAYETFIGEFARKSAWRERISPHRAPAILKDLLACEVPYCTPGGKPTLVNYSVPEIKRKFGLQA.

The tract at residues 338 to 407 (AAPEPERTLP…VPPPTLRAIP (70 aa)) is disordered. The span at 366–391 (PGSAFPAAARPAPASSAAQPPLSSSA) shows a compositional bias: low complexity.

Belongs to the DNA mismatch repair MutL/HexB family.

Its function is as follows. This protein is involved in the repair of mismatches in DNA. It is required for dam-dependent methyl-directed DNA mismatch repair. May act as a 'molecular matchmaker', a protein that promotes the formation of a stable complex between two or more DNA-binding proteins in an ATP-dependent manner without itself being part of a final effector complex. This is DNA mismatch repair protein MutL from Akkermansia muciniphila (strain ATCC BAA-835 / DSM 22959 / JCM 33894 / BCRC 81048 / CCUG 64013 / CIP 107961 / Muc).